Reading from the N-terminus, the 210-residue chain is HTH-type transcriptional repressor FabR (210 aa).

The 61-residue stretch at 10–70 (KTRRSLVEAA…TMVDESGLML (61 aa)) folds into the HTH tetR-type domain. Positions 33–52 (SLREVAREAGIAPTSFYRHF) form a DNA-binding region, H-T-H motif.

In terms of assembly, homodimer.

The protein resides in the cytoplasm. Represses the transcription of fabB, involved in unsaturated fatty acid (UFA) biosynthesis. By controlling UFA production, FabR directly influences the physical properties of the membrane bilayer. This Salmonella paratyphi A (strain ATCC 9150 / SARB42) protein is HTH-type transcriptional repressor FabR.